The sequence spans 320 residues: tRNA pseudouridine synthase B (320 aa).

Residue aspartate 41 is the Nucleophile of the active site. Disordered stretches follow at residues 116-136 and 259-284; these read PPQV…ARRG and DQCQ…DPSA. Basic and acidic residues predominate over residues 125–136; it reads QGERAHARARRG. Residues 270–284 show a composition bias toward polar residues; the sequence is SDQQESAPNQTDPSA.

It belongs to the pseudouridine synthase TruB family. Type 1 subfamily.

It catalyses the reaction uridine(55) in tRNA = pseudouridine(55) in tRNA. In terms of biological role, responsible for synthesis of pseudouridine from uracil-55 in the psi GC loop of transfer RNAs. The chain is tRNA pseudouridine synthase B from Prochlorococcus marinus (strain MIT 9313).